Reading from the N-terminus, the 360-residue chain is Ribosomal RNA large subunit methyltransferase F (360 aa).

Residues 1–36 form a disordered region; it reads MSKLISKQGKRPALSQSGLAKPSTSKKSSASKNANT. Positions 23 to 36 are enriched in low complexity; sequence STSKKSSASKNANT.

It belongs to the methyltransferase superfamily. METTL16/RlmF family.

It is found in the cytoplasm. The enzyme catalyses adenosine(1618) in 23S rRNA + S-adenosyl-L-methionine = N(6)-methyladenosine(1618) in 23S rRNA + S-adenosyl-L-homocysteine + H(+). Specifically methylates the adenine in position 1618 of 23S rRNA. In Shewanella denitrificans (strain OS217 / ATCC BAA-1090 / DSM 15013), this protein is Ribosomal RNA large subunit methyltransferase F.